The chain runs to 67 residues: Conotoxin Cl6.6b (67 aa).

The first 24 residues, 1 to 24 (MKLTCVLIAAVLLLAVCQLDSADA), serve as a signal peptide directing secretion. Positions 25–37 (TGYMRKNPSLRSP) are excised as a propeptide. 3 cysteine pairs are disulfide-bonded: Cys-43–Cys-57, Cys-50–Cys-61, and Cys-56–Cys-65.

Belongs to the conotoxin O1 superfamily. In terms of tissue distribution, expressed by the venom duct.

It localises to the secreted. The protein is Conotoxin Cl6.6b of Californiconus californicus (California cone).